The sequence spans 651 residues: Acetyl-coenzyme A synthetase (651 aa).

CoA is bound by residues 190-193, Thr-312, and Asn-336; that span reads RGGK. ATP-binding positions include 388–390, 412–417, Asp-501, and Arg-516; these read GEP and DTWWQT. Ser-524 contacts CoA. Arg-527 is an ATP binding site. Residues Val-538, His-540, and Val-543 each coordinate Mg(2+). Arg-585 serves as a coordination point for CoA. An N6-acetyllysine modification is found at Lys-610.

Belongs to the ATP-dependent AMP-binding enzyme family. Mg(2+) is required as a cofactor. In terms of processing, acetylated. Deacetylation by the SIR2-homolog deacetylase activates the enzyme.

It carries out the reaction acetate + ATP + CoA = acetyl-CoA + AMP + diphosphate. In terms of biological role, catalyzes the conversion of acetate into acetyl-CoA (AcCoA), an essential intermediate at the junction of anabolic and catabolic pathways. AcsA undergoes a two-step reaction. In the first half reaction, AcsA combines acetate with ATP to form acetyl-adenylate (AcAMP) intermediate. In the second half reaction, it can then transfer the acetyl group from AcAMP to the sulfhydryl group of CoA, forming the product AcCoA. This chain is Acetyl-coenzyme A synthetase, found in Mesorhizobium japonicum (strain LMG 29417 / CECT 9101 / MAFF 303099) (Mesorhizobium loti (strain MAFF 303099)).